The chain runs to 116 residues: Iron-sulfur cluster insertion protein ErpA (116 aa).

Positions 44, 108, and 110 each coordinate iron-sulfur cluster.

It belongs to the HesB/IscA family. In terms of assembly, homodimer. The cofactor is iron-sulfur cluster.

Functionally, required for insertion of 4Fe-4S clusters for at least IspG. This chain is Iron-sulfur cluster insertion protein ErpA, found in Shewanella sp. (strain ANA-3).